The chain runs to 139 residues: Plastocyanin (139 aa).

A signal peptide spans 1-34 (MKLIAQISRSLSLALFALVLMVGSFVAVMSPAAA). The 105-residue stretch at 35–139 (ETFTVKMGAD…GMVGKITVEG (105 aa)) folds into the Plastocyanin-like domain. The Cu cation site is built by His-73, Cys-123, His-126, and Met-131.

The protein belongs to the plastocyanin family. Cu(2+) is required as a cofactor.

It localises to the cellular thylakoid membrane. In terms of biological role, participates in electron transfer between P700 and the cytochrome b6-f complex in photosystem I. The chain is Plastocyanin (petE) from Leptolyngbya laminosa (Phormidium laminosum).